Reading from the N-terminus, the 362-residue chain is DNA replication and repair protein RecF (362 aa).

30-37 contacts ATP; the sequence is GLNAQGKS.

Belongs to the RecF family.

It is found in the cytoplasm. The RecF protein is involved in DNA metabolism; it is required for DNA replication and normal SOS inducibility. RecF binds preferentially to single-stranded, linear DNA. It also seems to bind ATP. The polypeptide is DNA replication and repair protein RecF (Thermoanaerobacter pseudethanolicus (strain ATCC 33223 / 39E) (Clostridium thermohydrosulfuricum)).